The sequence spans 162 residues: Caveolin-2 (162 aa).

Residues 1–86 (MGLETEKADV…FEISKYVIYK (86 aa)) lie on the Cytoplasmic side of the membrane. Tyrosine 19 bears the Phosphotyrosine; by SRC mark. 2 positions are modified to phosphoserine: serine 20 and serine 23. Tyrosine 27 is subject to Phosphotyrosine; by SRC. An intramembrane region (helical) is located at residues 87–107 (FLTVFLAIPLAFVAGILFATL). Residues 108 to 162 (SCLHIWIIMPFVKTCLMLLPSVQTIWKSVTDVVIAPLCTSAGRSFSSVSLQLSHD) are Cytoplasmic-facing.

Belongs to the caveolin family. In terms of assembly, monomer or homodimer. Interacts with CAV1; the interaction forms a stable heterooligomeric complex that is required for targeting to lipid rafts and for caveolae formation. Tyrosine phosphorylated forms do not form heterooligomers with the Tyr-19-phosphorylated form existing as a monomer or dimer, and the Tyr-27-form as a monomer only. Interacts (tyrosine phosphorylated form) with the SH2 domain-containing proteins, RASA1, NCK1 and SRC. Interacts (tyrosine phosphorylated form) with INSR, the interaction (Tyr-27-phosphorylated form) is increased on insulin stimulation. Interacts (Tyr-19 phosphorylated form) with MAPK1 (phosphorylated form); the interaction, promoted by insulin, leads to nuclear location and MAPK1 activation. Interacts with STAT3; the interaction is increased on insulin-induced tyrosine phosphorylation leading to STAT activation. In terms of processing, phosphorylated on serine and tyrosine residues. CAV1 promotes phosphorylation on Ser-23 which then targets the complex to the plasma membrane, lipid rafts and caveolae. Phosphorylation on both Tyr-19 and Tyr-27 is required for insulin-induced 'Ser-727' phosphorylation of STAT3 and its activation. Phosphorylation on Tyr-19 is required for insulin-induced phosphorylation of MAPK1 and DNA binding of STAT3. Tyrosine phosphorylation is induced by both EGF and insulin.

The protein localises to the nucleus. Its subcellular location is the cytoplasm. It localises to the golgi apparatus membrane. It is found in the cell membrane. The protein resides in the membrane. The protein localises to the caveola. Functionally, may act as a scaffolding protein within caveolar membranes. Interacts directly with G-protein alpha subunits and can functionally regulate their activity. Acts as an accessory protein in conjunction with CAV1 in targeting to lipid rafts and driving caveolae formation. Positive regulator of cellular mitogenesis of the MAPK signaling pathway. Required for the insulin-stimulated nuclear translocation and activation of MAPK1 and STAT3, and the subsequent regulation of cell cycle progression. This is Caveolin-2 (CAV2) from Equus caballus (Horse).